A 49-amino-acid chain; its full sequence is Large ribosomal subunit protein bL33B (49 aa).

Belongs to the bacterial ribosomal protein bL33 family.

In Shouchella clausii (strain KSM-K16) (Alkalihalobacillus clausii), this protein is Large ribosomal subunit protein bL33B.